The following is a 547-amino-acid chain: Chaperonin GroEL (547 aa).

ATP contacts are provided by residues 30–33, Lys-51, 87–91, Gly-415, 478–480, and Asp-494; these read TLGP, DGTTT, and NAA.

The protein belongs to the chaperonin (HSP60) family. Forms a cylinder of 14 subunits composed of two heptameric rings stacked back-to-back. Interacts with the co-chaperonin GroES.

It is found in the cytoplasm. It carries out the reaction ATP + H2O + a folded polypeptide = ADP + phosphate + an unfolded polypeptide.. Together with its co-chaperonin GroES, plays an essential role in assisting protein folding. The GroEL-GroES system forms a nano-cage that allows encapsulation of the non-native substrate proteins and provides a physical environment optimized to promote and accelerate protein folding. The chain is Chaperonin GroEL from Geobacter sp. (strain M21).